The primary structure comprises 142 residues: Galactose-6-phosphate isomerase subunit LacA (142 aa).

Belongs to the LacAB/RpiB family. In terms of assembly, heteromultimeric protein consisting of LacA and LacB.

The catalysed reaction is aldehydo-D-galactose 6-phosphate = keto-D-tagatose 6-phosphate. The protein operates within carbohydrate metabolism; D-galactose 6-phosphate degradation; D-tagatose 6-phosphate from D-galactose 6-phosphate: step 1/1. The chain is Galactose-6-phosphate isomerase subunit LacA from Staphylococcus epidermidis (strain ATCC 35984 / DSM 28319 / BCRC 17069 / CCUG 31568 / BM 3577 / RP62A).